The chain runs to 217 residues: Adenylate kinase (217 aa).

Position 10–15 (10–15) interacts with ATP; the sequence is GAGKGT. The interval 30 to 59 is NMP; that stretch reads STGDMFREAVAAGTELGVKVQNILSSGALV. AMP-binding positions include Thr-31, Arg-36, 57–59, 85–88, and Gln-92; these read ALV and GYPR. The LID stretch occupies residues 126-163; sequence SRRICPKCGKIYNLISMPPVSDQICDDCGEQLVIREDD. Residue Arg-127 coordinates ATP. Zn(2+) contacts are provided by Cys-130 and Cys-133. 136–137 is a binding site for ATP; it reads IY. 2 residues coordinate Zn(2+): Cys-150 and Cys-153. Residues Arg-160 and Arg-171 each coordinate AMP. An ATP-binding site is contributed by Arg-199.

The protein belongs to the adenylate kinase family. As to quaternary structure, monomer.

The protein localises to the cytoplasm. The enzyme catalyses AMP + ATP = 2 ADP. The protein operates within purine metabolism; AMP biosynthesis via salvage pathway; AMP from ADP: step 1/1. In terms of biological role, catalyzes the reversible transfer of the terminal phosphate group between ATP and AMP. Plays an important role in cellular energy homeostasis and in adenine nucleotide metabolism. The chain is Adenylate kinase from Pseudothermotoga lettingae (strain ATCC BAA-301 / DSM 14385 / NBRC 107922 / TMO) (Thermotoga lettingae).